The chain runs to 195 residues: MSSKYAVKLKTDFDNPRWIKRHKHMFDFLDINGNGKITLDEIVSKASDDICAKLEATPEQTKRHQVCVEAFFRGCGMEYGKEIAFPQFLDGWKQLATSELKKWARNEPTLIREWGDAVFDIFDKDGSGTITLDEWKAYGKISGISPSQEDCEATFRHCDLDNSGDLDVDEMTRQHLGFWYTLDPEADGLYGNGVP.

A propeptide spanning residues 1–6 (MSSKYA) is cleaved from the precursor. 4 EF-hand domains span residues 17–52 (RWIKRHKHMFDFLDINGNGKITLDEIVSKASDDICA), 53–88 (KLEATPEQTKRHQVCVEAFFRGCGMEYGKEIAFPQF), 110–145 (LIREWGDAVFDIFDKDGSGTITLDEWKAYGKISGIS), and 146–181 (PSQEDCEATFRHCDLDNSGDLDVDEMTRQHLGFWYT). Asp-30, Asn-32, Asn-34, Lys-36, and Glu-41 together coordinate Ca(2+). The Ca(2+) site is built by Asp-123, Asp-125, Ser-127, Thr-129, Glu-134, Asp-159, Asp-161, Ser-163, Asp-165, and Glu-170.

This sequence belongs to the aequorin family.

In terms of biological role, ca(2+)-dependent bioluminescence photoprotein. Displays an emission peak at 470 nm (blue light). Trace amounts of calcium ion trigger the intramolecular oxidation of the chromophore, coelenterazine into coelenteramide and CO(2) with the concomitant emission of light. The protein is Obelin of Obelia longissima (Black sea hydrozoan).